The sequence spans 316 residues: 4-hydroxy-3-methylbut-2-enyl diphosphate reductase (316 aa).

Cysteine 17 lines the [4Fe-4S] cluster pocket. 2 residues coordinate (2E)-4-hydroxy-3-methylbut-2-enyl diphosphate: histidine 46 and histidine 79. Dimethylallyl diphosphate is bound by residues histidine 46 and histidine 79. Residues histidine 46 and histidine 79 each contribute to the isopentenyl diphosphate site. Cysteine 101 contributes to the [4Fe-4S] cluster binding site. Histidine 129 is a (2E)-4-hydroxy-3-methylbut-2-enyl diphosphate binding site. Histidine 129 contributes to the dimethylallyl diphosphate binding site. Histidine 129 contributes to the isopentenyl diphosphate binding site. Residue glutamate 131 is the Proton donor of the active site. Threonine 170 contacts (2E)-4-hydroxy-3-methylbut-2-enyl diphosphate. [4Fe-4S] cluster is bound at residue cysteine 200. Residues serine 228, serine 229, asparagine 230, and serine 273 each coordinate (2E)-4-hydroxy-3-methylbut-2-enyl diphosphate. 4 residues coordinate dimethylallyl diphosphate: serine 228, serine 229, asparagine 230, and serine 273. The isopentenyl diphosphate site is built by serine 228, serine 229, asparagine 230, and serine 273.

It belongs to the IspH family. It depends on [4Fe-4S] cluster as a cofactor.

The enzyme catalyses isopentenyl diphosphate + 2 oxidized [2Fe-2S]-[ferredoxin] + H2O = (2E)-4-hydroxy-3-methylbut-2-enyl diphosphate + 2 reduced [2Fe-2S]-[ferredoxin] + 2 H(+). It carries out the reaction dimethylallyl diphosphate + 2 oxidized [2Fe-2S]-[ferredoxin] + H2O = (2E)-4-hydroxy-3-methylbut-2-enyl diphosphate + 2 reduced [2Fe-2S]-[ferredoxin] + 2 H(+). It functions in the pathway isoprenoid biosynthesis; dimethylallyl diphosphate biosynthesis; dimethylallyl diphosphate from (2E)-4-hydroxy-3-methylbutenyl diphosphate: step 1/1. Its pathway is isoprenoid biosynthesis; isopentenyl diphosphate biosynthesis via DXP pathway; isopentenyl diphosphate from 1-deoxy-D-xylulose 5-phosphate: step 6/6. Its function is as follows. Catalyzes the conversion of 1-hydroxy-2-methyl-2-(E)-butenyl 4-diphosphate (HMBPP) into a mixture of isopentenyl diphosphate (IPP) and dimethylallyl diphosphate (DMAPP). Acts in the terminal step of the DOXP/MEP pathway for isoprenoid precursor biosynthesis. In Roseobacter denitrificans (strain ATCC 33942 / OCh 114) (Erythrobacter sp. (strain OCh 114)), this protein is 4-hydroxy-3-methylbut-2-enyl diphosphate reductase.